We begin with the raw amino-acid sequence, 116 residues long: Large ribosomal subunit protein bL20 (116 aa).

The protein belongs to the bacterial ribosomal protein bL20 family.

In terms of biological role, binds directly to 23S ribosomal RNA and is necessary for the in vitro assembly process of the 50S ribosomal subunit. It is not involved in the protein synthesizing functions of that subunit. The sequence is that of Large ribosomal subunit protein bL20 from Picosynechococcus sp. (strain ATCC 27264 / PCC 7002 / PR-6) (Agmenellum quadruplicatum).